The primary structure comprises 342 residues: Tetraacyldisaccharide 4'-kinase (342 aa).

68–75 (TVGGTGKT) is a binding site for ATP.

Belongs to the LpxK family.

It catalyses the reaction a lipid A disaccharide + ATP = a lipid IVA + ADP + H(+). It functions in the pathway glycolipid biosynthesis; lipid IV(A) biosynthesis; lipid IV(A) from (3R)-3-hydroxytetradecanoyl-[acyl-carrier-protein] and UDP-N-acetyl-alpha-D-glucosamine: step 6/6. Transfers the gamma-phosphate of ATP to the 4'-position of a tetraacyldisaccharide 1-phosphate intermediate (termed DS-1-P) to form tetraacyldisaccharide 1,4'-bis-phosphate (lipid IVA). The polypeptide is Tetraacyldisaccharide 4'-kinase (Burkholderia vietnamiensis (strain G4 / LMG 22486) (Burkholderia cepacia (strain R1808))).